A 190-amino-acid chain; its full sequence is Lipid A acyltransferase PagP (190 aa).

The signal sequence occupies residues 1–18 (MKRLISCLTIICALNASA). Residues His60, Asp103, and Ser104 contribute to the active site.

The protein belongs to the lipid A palmitoyltransferase family. As to quaternary structure, homodimer.

The protein resides in the cell outer membrane. It catalyses the reaction a lipid A + a 1,2-diacyl-sn-glycero-3-phosphocholine = a hepta-acyl lipid A + a 2-acyl-sn-glycero-3-phosphocholine. The catalysed reaction is a lipid IVA + a 1,2-diacyl-sn-glycero-3-phosphocholine = a lipid IVB + a 2-acyl-sn-glycero-3-phosphocholine. It carries out the reaction a lipid IIA + a 1,2-diacyl-sn-glycero-3-phosphocholine = a lipid IIB + a 2-acyl-sn-glycero-3-phosphocholine. Its function is as follows. Transfers a fatty acid residue from the sn-1 position of a phospholipid to the N-linked hydroxyfatty acid chain on the proximal unit of lipid A or its precursors. This is Lipid A acyltransferase PagP from Legionella pneumophila (strain Corby).